A 250-amino-acid chain; its full sequence is Lectin 1 (250 aa).

An N-linked (GlcNAc...) asparagine; partial glycan is attached at N119. The Mn(2+) site is built by E128 and D130. Residues D130, Y132, N138, and D141 each contribute to the Ca(2+) site. Residues D141 and H146 each contribute to the Mn(2+) site.

This sequence belongs to the leguminous lectin family.

Di-N-acetylchitobiose specific lectin. This is Lectin 1 from Laburnum alpinum (Scotch laburnum).